Consider the following 207-residue polypeptide: Small ribosomal subunit protein uS4 (207 aa).

A disordered region spans residues 31–56; it reads KCKLDSKPGQHGRTSGARTSDYGNQL. Residues 42 to 53 show a composition bias toward polar residues; that stretch reads GRTSGARTSDYG. In terms of domain architecture, S4 RNA-binding spans 97–157; the sequence is TRLDNVVYRM…EKSKKQVRIV (61 aa).

The protein belongs to the universal ribosomal protein uS4 family. Part of the 30S ribosomal subunit. Contacts protein S5. The interaction surface between S4 and S5 is involved in control of translational fidelity.

Its function is as follows. One of the primary rRNA binding proteins, it binds directly to 16S rRNA where it nucleates assembly of the body of the 30S subunit. With S5 and S12 plays an important role in translational accuracy. The chain is Small ribosomal subunit protein uS4 from Herminiimonas arsenicoxydans.